Consider the following 253-residue polypeptide: Aminoglycoside nucleotidyltransferase (4') (253 aa).

Residues 1 to 127 form an N-terminal domain region; it reads MNGPIIMTRE…KVYQTAKSVE (127 aa). 5 residues coordinate ATP: serine 39, arginine 42, serine 49, aspartate 50, and glutamate 52. Mg(2+)-binding residues include aspartate 50 and glutamate 52. The neomycin B site is built by glutamate 52 and glutamate 67. The kanamycin A site is built by glutamate 67, lysine 74, glutamate 76, glutamate 141, and glutamate 145. Positions 128–241 are C-terminal domain; sequence AQTFHDAICA…NGIQEWTERH (114 aa). ATP contacts are provided by glutamate 145, lysine 149, and threonine 187. A Mg(2+)-binding site is contributed by glutamate 145. Glutamate 145 functions as the Proton acceptor in the catalytic mechanism.

As to quaternary structure, homodimer. Mg(2+) is required as a cofactor.

It catalyses the reaction amikacin + ATP = 4'-adenylylamikacin + diphosphate. It carries out the reaction kanamycin A + ATP = 4'-adenylylkanamycin A + diphosphate. The enzyme catalyses neomycin B + ATP = 4'-adenylylneomycin B + diphosphate. The catalysed reaction is paromomycin + ATP = 4'-adenylylparomomycin + diphosphate. It catalyses the reaction ribostamycin + ATP = 4'-adenylylribostamycin + diphosphate. It carries out the reaction tobramycin + ATP = 4'-adenylyltobramycin + diphosphate. The enzyme catalyses kanamycin A + CTP = 4'-cytidylylkanamycin A + diphosphate. The catalysed reaction is kanamycin A + GTP = 4'-guanylylkanamycin A + diphosphate. It catalyses the reaction kanamycin A + ITP = 4'-inosinylylkanamycin A + diphosphate. It carries out the reaction dTTP + kanamycin A = 4'-thymidylylkanamycin A + diphosphate. The enzyme catalyses kanamycin A + UTP = 4'-uridylylkanamycin A + diphosphate. The catalysed reaction is kanamycin A + dATP = 4'-(2'-deoxyadenylyl)kanamycin A + diphosphate. It catalyses the reaction kanamycin A + dCTP = 4'-(2'-deoxycytidylyl)kanamycin A + diphosphate. It carries out the reaction kanamycin A + dGTP = 4'-(2'-deoxyguanylyl)kanamycin A + diphosphate. The enzyme catalyses dUTP + kanamycin A = 4'-(2'-deoxyuridylyl)kanamycin A + diphosphate. The catalysed reaction is amikacin + GTP = 4'-guanylylamikacin + diphosphate. It catalyses the reaction amikacin + ITP = 4'-inosinylylamikacin + diphosphate. It carries out the reaction amikacin + CTP = 4'-cytidylylamikacin + diphosphate. The enzyme catalyses amikacin + UTP = 4'-uridylylamikacin + diphosphate. The catalysed reaction is amikacin + dTTP = 4'-thymidylylamikacin + diphosphate. Inactivates aminoglycoside antibiotics such as kanamycin by catalyzing the transfer of a nucleotidyl group from a wide variety of nucleoside triphosphates ((d)ATP, (d)CTP, (d)GTP, ITP, TTP and (d)UTP) to the 4'-hydroxyl group of the aminoglycoside. In vitro, antibiotics without the 4'-hydroxyl but possessing a 4''-hydroxyl group (e.g. sisomicin and gentamicin) are also modifed but with poor specificity. The 3' position of the NTP ribose ring does not tolerate large substitutions (e.g. ddATP) and dNTPs and TTP are better substrates than their NTP counterparts. A short (2.35 Angstrom) hydrogen bond initially facilitates tight binding of the substrate (between Glu-52 and antibiotic) that is subsequently disrupted by the assembly of the active ternary complex. This enables the release of products post-catalysis, a 'catch and release' mechanism. This chain is Aminoglycoside nucleotidyltransferase (4') (knt), found in Staphylococcus aureus.